Consider the following 410-residue polypeptide: Eukaryotic initiation factor 4A (410 aa).

A Q motif motif is present at residues 37 to 65 (ESFDSMGLQENLLRGIYAYGFEKPSAIQQ). Positions 68–238 (IVPFCKGLDV…RKFMNKPVRI (171 aa)) constitute a Helicase ATP-binding domain. Position 81-88 (81-88 (AQSGTGKT)) interacts with ATP. The DEAD box signature appears at 186–189 (DEAD). In terms of domain architecture, Helicase C-terminal spans 249-410 (GIKQFYVNID…ELPANVADLL (162 aa)).

Belongs to the DEAD box helicase family. eIF4A subfamily. In terms of assembly, eIF4F is a multi-subunit complex, the composition of which varies with external and internal environmental conditions. It is composed of at least EIF4A, EIF4E and EIF4G.

It carries out the reaction ATP + H2O = ADP + phosphate + H(+). Its function is as follows. ATP-dependent RNA helicase which is a subunit of the eIF4F complex involved in cap recognition and is required for mRNA binding to ribosome. In the current model of translation initiation, eIF4A unwinds RNA secondary structures in the 5'-UTR of mRNAs which is necessary to allow efficient binding of the small ribosomal subunit, and subsequent scanning for the initiator codon. This is Eukaryotic initiation factor 4A from Zea mays (Maize).